The following is a 273-amino-acid chain: Diphthine methyl ester synthase (273 aa).

S-adenosyl-L-methionine-binding positions include Leu10, Asp87, Gly90, 115–116 (SI), Leu166, Val224, and His249.

It belongs to the diphthine synthase family.

The enzyme catalyses 2-[(3S)-amino-3-carboxypropyl]-L-histidyl-[translation elongation factor 2] + 4 S-adenosyl-L-methionine = diphthine methyl ester-[translation elongation factor 2] + 4 S-adenosyl-L-homocysteine + 3 H(+). The protein operates within protein modification; peptidyl-diphthamide biosynthesis. In terms of biological role, S-adenosyl-L-methionine-dependent methyltransferase that catalyzes four methylations of the modified target histidine residue in translation elongation factor 2 (EF-2), to form an intermediate called diphthine methyl ester. The four successive methylation reactions represent the second step of diphthamide biosynthesis. The sequence is that of Diphthine methyl ester synthase (dph5) from Dictyostelium discoideum (Social amoeba).